We begin with the raw amino-acid sequence, 669 residues long: MSEPEVTSVVDMKSPNISSSCSFFKLKKLSEESLLQPPEKVFDIMYKLGEGSYGSVYKAVHKESSSIVAIKLVPVESDLHEIIKEISIMQQCDSPYVVRYYGSYFKQYDLWICMEYCGAGSVSDIMRLRKKTLTEDEIATILSDTLQGLVYLHLRRKIHRDIKAANILLNTEGYAKLADFGVAGQLTDTMAKRNTVIGTPFWMAPEVIEEIGYDCVADIWSLGITALEMAEGKPPYGEIHPMRAIFMIPQKPPPSFREPDRWSTEFIDFVSKCLVKEPDDRATATELLEHEFIRNAKHRSILKPMLEETCAIREQQRANRSFGGVLAASQAKSLATQENGMQQHITDNAFMEDPGTLVPEKFGEYQQSSASDATMIAHAEQGVDEGTLGPGGLRNLSKAAAPAAASSAASPLDMPAVDSGTMVELESNLGTMVINSDSDDSTTAKNNDDQKPRNRYRPQFLEHFDRKNAGDGRGDEKPIATEYSPAAAEQQQQQQQQQQQQQQDEQHLASGANDLNNWEHNMEMQFQQISAINQYGLQQHQQQQQVLMAYPLMNEQLIALNNQPNLLLSNAAPMGQQGIPAAAPAQPPPAYQNQHMHTQSHAYVEGEFEFLKFLTFDDLNQRLCNIDHEMELEIEQLNKKYNAKRQPIVDAMNAKRKRQQNINNNLIKI.

2 positions are modified to phosphoserine: serine 30 and serine 33. Residues 42–293 (FDIMYKLGEG…ATELLEHEFI (252 aa)) form the Protein kinase domain. ATP-binding positions include 48–56 (LGEGSYGSV) and lysine 71. Aspartate 161 serves as the catalytic Proton acceptor. Threonine 195 bears the Phosphothreonine; by Tao mark. The span at 432–445 (MVINSDSDDSTTAK) shows a compositional bias: polar residues. The disordered stretch occupies residues 432 to 508 (MVINSDSDDS…QQQQQDEQHL (77 aa)). Residues 460–479 (FLEHFDRKNAGDGRGDEKPI) are compositionally biased toward basic and acidic residues. A compositionally biased stretch (low complexity) spans 490-503 (QQQQQQQQQQQQQQ). One can recognise an SARAH domain in the interval 608 to 655 (FEFLKFLTFDDLNQRLCNIDHEMELEIEQLNKKYNAKRQPIVDAMNAK).

It belongs to the protein kinase superfamily. STE Ser/Thr protein kinase family. STE20 subfamily. As to quaternary structure, homodimer. Interacts with Sav and Wts. Interacts (via SARAH domain) with Ex. Interacts with Kibra. Autophosphorylated. In terms of tissue distribution, expressed in CNS during embryogenesis. In third instar larvae, it is expressed throughout all imaginal disks.

It is found in the apical cell membrane. Its subcellular location is the cytoplasm. The enzyme catalyses L-seryl-[protein] + ATP = O-phospho-L-seryl-[protein] + ADP + H(+). The catalysed reaction is L-threonyl-[protein] + ATP = O-phospho-L-threonyl-[protein] + ADP + H(+). In terms of biological role, plays a key role in the Hippo/SWH (Sav/Wts/Hpo) signaling pathway, a signaling pathway that plays a pivotal role in organ size control and tumor suppression by restricting proliferation and promoting apoptosis. The core of this pathway is composed of a kinase cascade wherein Hippo (Hpo), in complex with its regulatory protein Salvador (Sav), phosphorylates and activates Warts (Wts) in complex with its regulatory protein Mats, which in turn phosphorylates and inactivates the Yorkie (Yki) oncoprotein. The Hippo/SWH signaling pathway inhibits the activity of the transcriptional complex formed by Scalloped (sd) and Yki and the target genes of this pathway include cyclin-E (cycE), diap1 and bantam. Phosphorylates Sav, Wts and Th/DIAP1. Regulates the level of Th/DIAP1 apoptosis inhibitor. The chain is Serine/threonine-protein kinase hippo (hpo) from Drosophila melanogaster (Fruit fly).